The primary structure comprises 286 residues: Ribosomal RNA small subunit methyltransferase A (286 aa).

S-adenosyl-L-methionine-binding residues include Asn31, Ile33, Gly58, Glu80, Asp106, and Asn125.

It belongs to the class I-like SAM-binding methyltransferase superfamily. rRNA adenine N(6)-methyltransferase family. RsmA subfamily.

It is found in the cytoplasm. The enzyme catalyses adenosine(1518)/adenosine(1519) in 16S rRNA + 4 S-adenosyl-L-methionine = N(6)-dimethyladenosine(1518)/N(6)-dimethyladenosine(1519) in 16S rRNA + 4 S-adenosyl-L-homocysteine + 4 H(+). In terms of biological role, specifically dimethylates two adjacent adenosines (A1518 and A1519) in the loop of a conserved hairpin near the 3'-end of 16S rRNA in the 30S particle. May play a critical role in biogenesis of 30S subunits. This is Ribosomal RNA small subunit methyltransferase A from Wolbachia pipientis wMel.